We begin with the raw amino-acid sequence, 1034 residues long: Teashirt homolog 2 (1034 aa).

The segment at 1-90 (MPRRKQQAPK…NESLLSDASD (90 aa)) is disordered. Residues 13-38 (AGYAQEEQLKEEEEIKEEEEEEDSGS) adopt a coiled-coil conformation. The segment covering 21–36 (LKEEEEIKEEEEEEDS) has biased composition (acidic residues). Residues 65 to 90 (SYQNSPGSHLSNQDAENESLLSDASD) are compositionally biased toward polar residues. A Glycyl lysine isopeptide (Lys-Gly) (interchain with G-Cter in SUMO2) cross-link involves residue Lys188. 2 consecutive C2H2-type zinc fingers follow at residues 215-239 (FRCR…ETGH) and 275-299 (LKCM…KTKH). The disordered stretch occupies residues 239 to 265 (HYQDDNRKKDKLRPTSYSKPRKRAFQD). Glycyl lysine isopeptide (Lys-Gly) (interchain with G-Cter in SUMO2) cross-links involve residues Lys306 and Lys315. The segment at 380-404 (LKCMECGSSHDTLQQLTTHMMVTGH) adopts a C2H2-type 3; atypical zinc-finger fold. Residue Lys417 forms a Glycyl lysine isopeptide (Lys-Gly) (interchain with G-Cter in SUMO2) linkage. The span at 432–455 (LSEAPNSDSLAPKPSSNSASDCTA) shows a compositional bias: polar residues. The disordered stretch occupies residues 432–496 (LSEAPNSDSL…PLQKPLDPTI (65 aa)). Residues 459–482 (ELKKESKKERPEETSKDEKVVKSE) are compositionally biased toward basic and acidic residues. Residues Lys461, Lys480, Lys497, Lys601, and Lys652 each participate in a glycyl lysine isopeptide (Lys-Gly) (interchain with G-Cter in SUMO2) cross-link. Disordered regions lie at residues 598 to 676 (TQVK…TSAL) and 763 to 789 (QPID…PPQK). Residues 600-668 (VKKESEDKDE…KEGSEKEKPQ (69 aa)) show a composition bias toward basic and acidic residues. Glycyl lysine isopeptide (Lys-Gly) (interchain with G-Cter in SUMO2) cross-links involve residues Lys800 and Lys820. Residues 841–911 (RKGRQSNWNP…NVKYQLRKTG (71 aa)) constitute a DNA-binding region (homeobox; atypical). Residues 926–948 (FYCSDCASQFRTPSTYISHLESH) form a C2H2-type 4 zinc finger. Lys966 participates in a covalent cross-link: Glycyl lysine isopeptide (Lys-Gly) (interchain with G-Cter in SUMO2). Position 980 is a phosphoserine (Ser980). The segment at 994–1017 (FKCKLCCRTFVSKHAVKLHLSKTH) adopts a C2H2-type 5 zinc-finger fold. Residues 1014–1034 (SKTHSKSPEHHSQFVTDVDEE) form a disordered region.

This sequence belongs to the teashirt C2H2-type zinc-finger protein family. As to quaternary structure, interacts (via homeobox domain) with APBB1 (via PID domain 1). In terms of processing, sumoylated. Expressed in brain; strongly reduced in post-mortem elderly subjects with Alzheimer disease.

The protein resides in the nucleus. Functionally, probable transcriptional regulator involved in developmental processes. May act as a transcriptional repressor (Potential). In Homo sapiens (Human), this protein is Teashirt homolog 2 (TSHZ2).